We begin with the raw amino-acid sequence, 189 residues long: NADH-quinone oxidoreductase subunit B (189 aa).

[4Fe-4S] cluster is bound by residues Cys-39, Cys-40, Cys-104, and Cys-135.

The protein belongs to the complex I 20 kDa subunit family. NDH-1 is composed of 14 different subunits. Subunits NuoB, C, D, E, F, and G constitute the peripheral sector of the complex. The cofactor is [4Fe-4S] cluster.

It is found in the cell inner membrane. The catalysed reaction is a quinone + NADH + 5 H(+)(in) = a quinol + NAD(+) + 4 H(+)(out). NDH-1 shuttles electrons from NADH, via FMN and iron-sulfur (Fe-S) centers, to quinones in the respiratory chain. The immediate electron acceptor for the enzyme in this species is believed to be a menaquinone. Couples the redox reaction to proton translocation (for every two electrons transferred, four hydrogen ions are translocated across the cytoplasmic membrane), and thus conserves the redox energy in a proton gradient. This chain is NADH-quinone oxidoreductase subunit B, found in Chlorobaculum parvum (strain DSM 263 / NCIMB 8327) (Chlorobium vibrioforme subsp. thiosulfatophilum).